The sequence spans 452 residues: Serine carboxypeptidase-like 26 (452 aa).

The signal sequence occupies residues 1–20 (MARLLLLFFFFLILLHYASC). Residues Asn52 and Asn138 are each glycosylated (N-linked (GlcNAc...) asparagine). Disulfide bonds link Cys87/Cys338, Cys244/Cys256, and Cys280/Cys306. Ser180 is an active-site residue. N-linked (GlcNAc...) asparagine glycosylation occurs at Asn327. Catalysis depends on residues Asp375 and His427.

The protein belongs to the peptidase S10 family. Ubiquitous.

The protein localises to the secreted. In terms of biological role, probable carboxypeptidase. This is Serine carboxypeptidase-like 26 (SCPL26) from Arabidopsis thaliana (Mouse-ear cress).